The following is a 117-amino-acid chain: MTSELPPQIQNQIAQLQQVQQQVQALAMQKSQIEAMQKESKMALEELEKLADDAVVYRNVGELVIKTSKEESVSKLKDREETLSLRLQSISRQEERLTTRFKQLQEQIQQALGPKAQ.

Belongs to the prefoldin subunit beta family. Heterohexamer of two alpha and four beta subunits.

The protein resides in the cytoplasm. Its function is as follows. Molecular chaperone capable of stabilizing a range of proteins. Seems to fulfill an ATP-independent, HSP70-like function in archaeal de novo protein folding. The sequence is that of Prefoldin subunit beta (pfdB) from Methanosarcina acetivorans (strain ATCC 35395 / DSM 2834 / JCM 12185 / C2A).